The sequence spans 335 residues: Putative SWIB domain-containing protein R508 (335 aa).

Residues 1 to 12 are compositionally biased toward basic residues; the sequence is MSKRVTSSKKSK. The interval 1-182 is disordered; that stretch reads MSKRVTSSKK…NKKSPKKLLN (182 aa). The segment covering 24–33 has biased composition (low complexity); the sequence is KNLSKTSKSV. Residues 60–75 are compositionally biased toward polar residues; sequence NIGGSKSSRTYNSEGS. Basic and acidic residues predominate over residues 83–109; sequence SSKDSKVIKKNKQKVESSDSEKHSENK. Over residues 110–126 the composition is skewed to basic residues; that stretch reads SHKKSSKSSSISRKKPI. The segment covering 163-173 has biased composition (basic and acidic residues); that stretch reads KGEDNNDEKQN. Residues 181 to 217 are a coiled coil; that stretch reads LNEKKISSESFDDKLNELREELRENYIRQKKIMNDIK. An SWIB/MDM2 domain is found at 244–326; sequence GFNKPQTVPQ…QTWLKKVYNE (83 aa).

This chain is Putative SWIB domain-containing protein R508, found in Acanthamoeba polyphaga mimivirus (APMV).